The sequence spans 224 residues: MASSRSVVLRVLVAVAVVAAAGAPRLAVADSPPLQDICVADLRAATAVDGFPCKPTASVVSDDFFCDAIVQAPSTSNPFGVNSTRATVSAFPGLNTLGLSITRTDLAPGGLNPPHSHPRASELVLVLSGEVMVGFTTAANRLFSKVVREKELFVVPRGLQHFQLNVGAGNASFVAMFDSQSPGLVTPTFALFATQPAMPMEVLAKTFLMGEDEVGAIKSKFAGF.

A signal peptide spans 1 to 29 (MASSRSVVLRVLVAVAVVAAAGAPRLAVA). Cysteine 38 and cysteine 53 are disulfide-bonded. One can recognise a Cupin type-1 domain in the interval 67–215 (DAIVQAPSTS…TFLMGEDEVG (149 aa)). The N-linked (GlcNAc...) asparagine glycan is linked to asparagine 82. Mn(2+)-binding residues include histidine 115, histidine 117, glutamate 122, and histidine 161. Asparagine 170 carries N-linked (GlcNAc...) asparagine glycosylation.

Belongs to the germin family. As to quaternary structure, oligomer (believed to be a pentamer but probably hexamer).

It is found in the secreted. The protein localises to the extracellular space. Its subcellular location is the apoplast. Its function is as follows. May play a role in plant defense. Probably has no oxalate oxidase activity even if the active site is conserved. In Oryza sativa subsp. japonica (Rice), this protein is Germin-like protein 1-2.